A 270-amino-acid polypeptide reads, in one-letter code: Putative pyruvate, phosphate dikinase regulatory protein (270 aa).

Residue 148–155 (GISRTSKT) coordinates ADP.

It belongs to the pyruvate, phosphate/water dikinase regulatory protein family. PDRP subfamily.

It carries out the reaction N(tele)-phospho-L-histidyl/L-threonyl-[pyruvate, phosphate dikinase] + ADP = N(tele)-phospho-L-histidyl/O-phospho-L-threonyl-[pyruvate, phosphate dikinase] + AMP + H(+). It catalyses the reaction N(tele)-phospho-L-histidyl/O-phospho-L-threonyl-[pyruvate, phosphate dikinase] + phosphate + H(+) = N(tele)-phospho-L-histidyl/L-threonyl-[pyruvate, phosphate dikinase] + diphosphate. Its function is as follows. Bifunctional serine/threonine kinase and phosphorylase involved in the regulation of the pyruvate, phosphate dikinase (PPDK) by catalyzing its phosphorylation/dephosphorylation. The polypeptide is Putative pyruvate, phosphate dikinase regulatory protein (Bacillus mycoides (strain KBAB4) (Bacillus weihenstephanensis)).